Consider the following 45-residue polypeptide: Large ribosomal subunit protein bL34 (45 aa).

It belongs to the bacterial ribosomal protein bL34 family.

This chain is Large ribosomal subunit protein bL34, found in Prochlorococcus marinus (strain MIT 9313).